The following is a 63-amino-acid chain: Large ribosomal subunit protein bL28 (63 aa).

This sequence belongs to the bacterial ribosomal protein bL28 family.

In Kosmotoga olearia (strain ATCC BAA-1733 / DSM 21960 / TBF 19.5.1), this protein is Large ribosomal subunit protein bL28.